We begin with the raw amino-acid sequence, 454 residues long: tRNA modification GTPase MnmE (454 aa).

Residues Arg23, Glu80, and Lys120 each contribute to the (6S)-5-formyl-5,6,7,8-tetrahydrofolate site. The TrmE-type G domain maps to 216–377 (GMKVVIAGRP…LRNHLKQSMG (162 aa)). Asn226 serves as a coordination point for K(+). Residues 226–231 (NAGKSS), 245–251 (TDIAGTT), 270–273 (DTAG), 335–338 (NKAD), and 358–360 (SAR) contribute to the GTP site. Ser230 is a binding site for Mg(2+). Thr245, Ile247, and Thr250 together coordinate K(+). Residue Thr251 coordinates Mg(2+). Lys454 is a binding site for (6S)-5-formyl-5,6,7,8-tetrahydrofolate.

This sequence belongs to the TRAFAC class TrmE-Era-EngA-EngB-Septin-like GTPase superfamily. TrmE GTPase family. In terms of assembly, homodimer. Heterotetramer of two MnmE and two MnmG subunits. Requires K(+) as cofactor.

It is found in the cytoplasm. Its function is as follows. Exhibits a very high intrinsic GTPase hydrolysis rate. Involved in the addition of a carboxymethylaminomethyl (cmnm) group at the wobble position (U34) of certain tRNAs, forming tRNA-cmnm(5)s(2)U34. This is tRNA modification GTPase MnmE from Escherichia coli (strain SMS-3-5 / SECEC).